The primary structure comprises 192 residues: Probable metallophosphoesterase MJ0623 (192 aa).

Aspartate 41, histidine 43, aspartate 70, asparagine 92, histidine 115, histidine 144, and histidine 146 together coordinate a divalent metal cation.

The protein belongs to the metallophosphoesterase superfamily. YfcE family. The cofactor is a divalent metal cation.

This Methanocaldococcus jannaschii (strain ATCC 43067 / DSM 2661 / JAL-1 / JCM 10045 / NBRC 100440) (Methanococcus jannaschii) protein is Probable metallophosphoesterase MJ0623.